Reading from the N-terminus, the 490-residue chain is tRNA-guanine(15) transglycosylase (490 aa).

Aspartate 90 functions as the Nucleophile in the catalytic mechanism. Substrate contacts are provided by aspartate 125 and alanine 193. Zn(2+) is bound by residues cysteine 276, cysteine 278, and cysteine 281.

It belongs to the archaeosine tRNA-ribosyltransferase family. Zn(2+) is required as a cofactor.

It catalyses the reaction guanosine(15) in tRNA + 7-cyano-7-deazaguanine = 7-cyano-7-carbaguanosine(15) in tRNA + guanine. It participates in tRNA modification; archaeosine-tRNA biosynthesis. Functionally, exchanges the guanine residue with 7-cyano-7-deazaguanine (preQ0) at position 15 in the dihydrouridine loop (D-loop) of archaeal tRNAs. This chain is tRNA-guanine(15) transglycosylase, found in Methanosarcina acetivorans (strain ATCC 35395 / DSM 2834 / JCM 12185 / C2A).